Here is a 429-residue protein sequence, read N- to C-terminus: Protein cereblon (429 aa).

The interval 1 to 30 is disordered; it reads MGNHLPLLPAESEEEDEMEVEDQDSKEAKK. Positions 11-22 are enriched in acidic residues; it reads ESEEEDEMEVED. A Phosphoserine modification is found at serine 12. Residues 68–306 form the Lon N-terminal domain; the sequence is IPVLPQVMMI…CELDIMNKCT (239 aa). Positions 305-413 constitute a CULT domain; the sequence is CTSLCCKQCQ…LTRSALLPTI (109 aa). Positions 310 and 313 each coordinate Zn(2+). (S)-thalidomide-binding residues include histidine 365, tryptophan 367, and tryptophan 373. Zn(2+) contacts are provided by cysteine 378 and cysteine 381.

Belongs to the CRBN family. As to quaternary structure, component of a DCX (DDB1-CUL4-X-box) protein ligase complex, at least composed of CRBN, CUL4A, DDB1 and RBX1. Interacts directly with DDB1. Interacts with KCNT1. Interacts with ILF2. Interacts with TRAF6 and ECSIT. Post-translationally, ubiquitinated, ubiquitination is mediated by its own DCX protein ligase complex.

The protein localises to the cytoplasm. It is found in the nucleus. Its subcellular location is the membrane. The protein operates within protein modification; protein ubiquitination. Its function is as follows. Substrate recognition component of a DCX (DDB1-CUL4-X-box) E3 protein ligase complex that mediates the ubiquitination and subsequent proteasomal degradation of target proteins, such as MEIS2, ILF2 or GLUL. Normal degradation of key regulatory proteins is required for normal limb outgrowth and expression of the fibroblast growth factor FGF8. Maintains presynaptic glutamate release and consequently cognitive functions, such as memory and learning, by negatively regulating large-conductance calcium-activated potassium (BK) channels in excitatory neurons. Likely to function by regulating the assembly and neuronal surface expression of BK channels via its interaction with KCNT1. May also be involved in regulating anxiety-like behaviors via a BK channel-independent mechanism. Plays a negative role in TLR4 signaling by interacting with TRAF6 and ECSIT, leading to inhibition of ECSIT ubiquitination, an important step of the signaling. In Pongo abelii (Sumatran orangutan), this protein is Protein cereblon (CRBN).